The following is a 105-amino-acid chain: Large ribosomal subunit protein uL24 (105 aa).

This sequence belongs to the universal ribosomal protein uL24 family. Part of the 50S ribosomal subunit.

One of two assembly initiator proteins, it binds directly to the 5'-end of the 23S rRNA, where it nucleates assembly of the 50S subunit. Functionally, one of the proteins that surrounds the polypeptide exit tunnel on the outside of the subunit. This is Large ribosomal subunit protein uL24 from Dictyoglomus thermophilum (strain ATCC 35947 / DSM 3960 / H-6-12).